An 84-amino-acid chain; its full sequence is Small ribosomal subunit protein uS17 (84 aa).

Belongs to the universal ribosomal protein uS17 family. Part of the 30S ribosomal subunit.

In terms of biological role, one of the primary rRNA binding proteins, it binds specifically to the 5'-end of 16S ribosomal RNA. This is Small ribosomal subunit protein uS17 from Pectobacterium atrosepticum (strain SCRI 1043 / ATCC BAA-672) (Erwinia carotovora subsp. atroseptica).